The following is a 410-amino-acid chain: Venom metalloproteinase 2 (410 aa).

A signal peptide spans 1–22; that stretch reads MDTFILTYSILFLALFIESIHS. 6 N-linked (GlcNAc...) asparagine glycosylation sites follow: asparagine 64, asparagine 112, asparagine 187, asparagine 231, asparagine 292, and asparagine 307. Residues 214–410 enclose the Peptidase M12B domain; that stretch reads FYPKLLVLVD…NNNVSKFIWS (197 aa). Histidine 365 contributes to the Zn(2+) binding site. Residue glutamate 366 is part of the active site. The Zn(2+) site is built by histidine 369 and histidine 375. A glycan (N-linked (GlcNAc...) asparagine) is linked at asparagine 403.

This sequence in the C-terminal section; belongs to the venom metalloproteinase (M12B) family. As to quaternary structure, monomer. Requires Zn(2+) as cofactor. As to expression, expressed by the venom gland.

The protein localises to the secreted. The gelatinase activity is inhibited by EDTA. Functionally, the recombinant protein has gelatinase activity. In vivo, injection of this recombinant into fifth instar L.oleracea (host) larvae results in partial insect mortality associated with the molt to sixth instar, with surviving insects showing retarded development and growth. The polypeptide is Venom metalloproteinase 2 (Eulophus pennicornis (Parasitoid wasp)).